A 518-amino-acid chain; its full sequence is Retinal dehydrogenase 2 (518 aa).

Tyrosine 168 bears the Phosphotyrosine mark. Residues 184-186 (IPW), 210-213 (KPAE), and 264-266 (STE) contribute to the NAD(+) site. Glutamate 286 acts as the Proton acceptor in catalysis. Cysteine 320 serves as the catalytic Nucleophile. Residue serine 351 is modified to Phosphoserine. NAD(+) is bound by residues 366 to 370 (KQYNK) and glutamate 417.

It belongs to the aldehyde dehydrogenase family. Homotetramer.

It is found in the cytoplasm. The enzyme catalyses retinal + NAD(+) + H2O = retinoate + NADH + 2 H(+). The catalysed reaction is all-trans-retinal + NAD(+) + H2O = all-trans-retinoate + NADH + 2 H(+). It catalyses the reaction all-trans-13,14-dihydroretinal + NAD(+) + H2O = all-trans-13,14-dihydroretinoate + NADH + 2 H(+). The protein operates within cofactor metabolism; retinol metabolism. Functionally, catalyzes the NAD-dependent oxidation of aldehyde substrates, such as all-trans-retinal and all-trans-13,14-dihydroretinal, to their corresponding carboxylic acids, all-trans-retinoate and all-trans-13,14-dihydroretinoate, respectively. Retinoate signaling is critical for the transcriptional control of many genes, for instance it is crucial for initiation of meiosis in both male and female. Recognizes retinal as substrate, both in its free form and when bound to cellular retinol-binding protein. Lacks activity with benzaldehyde, acetaldehyde and octanal. Displays complete lack of activity with citral. This is Retinal dehydrogenase 2 (Aldh1a2) from Mus musculus (Mouse).